An 890-amino-acid chain; its full sequence is Tyrosine-protein kinase receptor TYRO3 (890 aa).

Residues 1 to 40 form the signal peptide; the sequence is MALRRSMGRPGLPPLPLPPPPRLGLLLAALASLLLPESAA. Ig-like C2-type domains are found at residues 41–128 and 139–220; these read AGLK…TEIS and PFFT…ATVH. Topologically, residues 41–429 are extracellular; that stretch reads AGLKLMGAPV…QGPPHSRTSW (389 aa). Residue N63 is glycosylated (N-linked (GlcNAc...) asparagine). Intrachain disulfides connect C64–C117 and C160–C203. 6 N-linked (GlcNAc...) asparagine glycosylation sites follow: N191, N230, N240, N293, N366, and N380. Fibronectin type-III domains are found at residues 227-320 and 325-416; these read APFN…TKGL and APQN…SHDR. Residues 430 to 450 traverse the membrane as a helical segment; it reads VPVVLGVLTALVTAAALALIL. Over 451 to 890 the chain is Cytoplasmic; that stretch reads LRKRRKETRF…QQGLLPHSSC (440 aa). S466 carries the phosphoserine modification. The 273-residue stretch at 518 to 790 folds into the Protein kinase domain; the sequence is FTLGRMLGKG…CLRMELENIL (273 aa). ATP contacts are provided by residues 524 to 532 and K550; that span reads LGKGEFGSV. D655 acts as the Proton acceptor in catalysis. Phosphotyrosine; by autocatalysis is present on residues Y681, Y685, Y686, and Y804. 2 disordered regions span residues 815 to 837 and 851 to 871; these read AGGSLELPGRDQPYSGAGDGSGM and LTPGGLAEQPGQAEHQPESPL. S818 and S869 each carry phosphoserine.

The protein belongs to the protein kinase superfamily. Tyr protein kinase family. AXL/UFO subfamily. In terms of assembly, monomer and homodimer. Interacts (via N-terminus) with extracellular ligands TULP1 and GAS6. Interacts with PIK3R1; this interaction increases PI3-kinase activity. In terms of processing, autophosphorylated. In terms of tissue distribution, abundant in the brain and lower levels in other tissues.

It is found in the cell membrane. The enzyme catalyses L-tyrosyl-[protein] + ATP = O-phospho-L-tyrosyl-[protein] + ADP + H(+). Receptor tyrosine kinase that transduces signals from the extracellular matrix into the cytoplasm by binding to several ligands including TULP1 or GAS6. Regulates many physiological processes including cell survival, migration and differentiation. Ligand binding at the cell surface induces dimerization and autophosphorylation of TYRO3 on its intracellular domain that provides docking sites for downstream signaling molecules. Following activation by ligand, interacts with PIK3R1 and thereby enhances PI3-kinase activity. Activates the AKT survival pathway, including nuclear translocation of NF-kappa-B and up-regulation of transcription of NF-kappa-B-regulated genes. TYRO3 signaling plays a role in various processes such as neuron protection from excitotoxic injury, platelet aggregation and cytoskeleton reorganization. Also plays an important role in inhibition of Toll-like receptors (TLRs)-mediated innate immune response by activating STAT1, which selectively induces production of suppressors of cytokine signaling SOCS1 and SOCS3. Functionally, (Microbial infection) Acts as a receptor for lassa virus and lymphocytic choriomeningitis virus, possibly through GAS6 binding to phosphatidyl-serine at the surface of virion envelope. In terms of biological role, (Microbial infection) Acts as a receptor for Ebolavirus, possibly through GAS6 binding to phosphatidyl-serine at the surface of virion envelope. The polypeptide is Tyrosine-protein kinase receptor TYRO3 (TYRO3) (Homo sapiens (Human)).